We begin with the raw amino-acid sequence, 116 residues long: Protein Rev (116 aa).

Position 5 is a phosphoserine; by host CK2 (Ser5). The homomultimerization stretch occupies residues 18–26 (YIKILYQSN). The short motif at 34 to 50 (TRKARRNRRRRWRARQR) is the Nuclear localization signal and RNA-binding (RRE) element. A Nuclear export signal and binding to XPO1 motif is present at residues 73 to 84 (LQLPLLEKLHIN). Positions 90–116 (GQGTEKGVGSPQISVESRAVLGSGTKE) are disordered. Residue Ser99 is modified to Phosphoserine; by host.

It belongs to the HIV-1 REV protein family. In terms of assembly, homomultimer; when bound to the RRE. Multimeric assembly is essential for activity and may involve XPO1. Binds to human KPNB1, XPO1, TNPO1, RANBP5 and IPO7. Interacts with the viral Integrase. Interacts with human KHDRBS1. Interacts with human NAP1; this interaction decreases Rev multimerization and stimulates its activity. Interacts with human DEAD-box helicases DDX3 and DDX24; these interactions may serve for viral RNA export to the cytoplasm and packaging, respectively. Interacts with human PSIP1; this interaction may inhibit HIV-1 DNA integration by promoting dissociation of the Integrase-LEDGF/p75 complex. In terms of processing, asymmetrically arginine dimethylated at one site by host PRMT6. Methylation impairs the RNA-binding activity and export of viral RNA from the nucleus to the cytoplasm. Post-translationally, phosphorylated by protein kinase CK2. Presence of, and maybe binding to the N-terminus of the regulatory beta subunit of CK2 is necessary for CK2-mediated Rev's phosphorylation.

It localises to the host nucleus. The protein resides in the host nucleolus. The protein localises to the host cytoplasm. In terms of biological role, escorts unspliced or incompletely spliced viral pre-mRNAs (late transcripts) out of the nucleus of infected cells. These pre-mRNAs carry a recognition sequence called Rev responsive element (RRE) located in the env gene, that is not present in fully spliced viral mRNAs (early transcripts). This function is essential since most viral proteins are translated from unspliced or partially spliced pre-mRNAs which cannot exit the nucleus by the pathway used by fully processed cellular mRNAs. Rev itself is translated from a fully spliced mRNA that readily exits the nucleus. Rev's nuclear localization signal (NLS) binds directly to KPNB1/Importin beta-1 without previous binding to KPNA1/Importin alpha-1. KPNB1 binds to the GDP bound form of RAN (Ran-GDP) and targets Rev to the nucleus. In the nucleus, the conversion from Ran-GDP to Ran-GTP dissociates Rev from KPNB1 and allows Rev's binding to the RRE in viral pre-mRNAs. Rev multimerization on the RRE via cooperative assembly exposes its nuclear export signal (NES) to the surface. Rev can then form a complex with XPO1/CRM1 and Ran-GTP, leading to nuclear export of the complex. Conversion from Ran-GTP to Ran-GDP mediates dissociation of the Rev/RRE/XPO1/RAN complex, so that Rev can return to the nucleus for a subsequent round of export. Beside KPNB1, also seems to interact with TNPO1/Transportin-1, RANBP5/IPO5 and IPO7/RANBP7 for nuclear import. The nucleoporin-like HRB/RIP is an essential cofactor that probably indirectly interacts with Rev to release HIV RNAs from the perinuclear region to the cytoplasm. The sequence is that of Protein Rev from Human immunodeficiency virus type 1 group M subtype F2 (isolate MP257) (HIV-1).